A 469-amino-acid chain; its full sequence is ATP synthase subunit beta (469 aa).

156 to 163 is an ATP binding site; that stretch reads GGAGVGKT.

The protein belongs to the ATPase alpha/beta chains family. In terms of assembly, F-type ATPases have 2 components, CF(1) - the catalytic core - and CF(0) - the membrane proton channel. CF(1) has five subunits: alpha(3), beta(3), gamma(1), delta(1), epsilon(1). CF(0) has three main subunits: a(1), b(2) and c(9-12). The alpha and beta chains form an alternating ring which encloses part of the gamma chain. CF(1) is attached to CF(0) by a central stalk formed by the gamma and epsilon chains, while a peripheral stalk is formed by the delta and b chains.

The protein resides in the cell membrane. It catalyses the reaction ATP + H2O + 4 H(+)(in) = ADP + phosphate + 5 H(+)(out). In terms of biological role, produces ATP from ADP in the presence of a proton gradient across the membrane. The catalytic sites are hosted primarily by the beta subunits. The polypeptide is ATP synthase subunit beta (Lactococcus lactis subsp. cremoris (strain SK11)).